A 402-amino-acid polypeptide reads, in one-letter code: Zinc finger CCHC domain-containing protein 12 (402 aa).

The segment at Ile308–Arg341 is disordered. Over residues Pro311–Ser322 the composition is skewed to polar residues. The CCHC-type zinc-finger motif lies at Ile345–Asn362.

Belongs to the ZCCHC12 family. Interacts with SMAD1 and CREB-binding protein (CBP). Forms a protein-DNA complex through its association with SMAD1.

Its function is as follows. Transcriptional coactivator in the bone morphogenetic protein (BMP)-signaling pathway. It positively modulates BMP signaling by interacting with SMAD1 and associating with CBP in the transcription complex. It contributes to the BMP-induced enhancement of cholinergic-neuron-specific gene expression. The sequence is that of Zinc finger CCHC domain-containing protein 12 (ZCCHC12) from Homo sapiens (Human).